The following is a 128-amino-acid chain: Protein FAM229A (128 aa).

The tract at residues 1–96 (MQSSPSTLGP…VATDQNPVRP (96 aa)) is disordered.

This sequence belongs to the FAM229 family.

This is Protein FAM229A (Fam229a) from Mus musculus (Mouse).